A 348-amino-acid polypeptide reads, in one-letter code: AT-hook motif nuclear-localized protein 9 (348 aa).

Residues 18–156 (HRGLSGSGPP…MASVGELMPS (139 aa)) are disordered. A compositionally biased stretch (polar residues) spans 31 to 46 (GSPQQQQGLRHLPNQN). Over residues 47-60 (SPFGSGSTGFGSPS) the composition is skewed to low complexity. Positions 98–106 (KRKRGRPRK) match the Bipartite nuclear localization signal motif. A DNA-binding region (a.T hook 1) is located at residues 98–110 (KRKRGRPRKYGQD). A compositionally biased stretch (low complexity) spans 112–131 (SVSLALSSSSVSTITPNNSN). The a.T hook 2 DNA-binding region spans 132 to 144 (KRGRGRPPGSGKK). Positions 157 to 299 (SSGMSFTPHV…EEEASEVVQE (143 aa)) constitute a PPC domain.

The protein resides in the nucleus. Transcription factor that specifically binds AT-rich DNA sequences related to the nuclear matrix attachment regions (MARs). This Arabidopsis thaliana (Mouse-ear cress) protein is AT-hook motif nuclear-localized protein 9.